Reading from the N-terminus, the 268-residue chain is Minor capsid protein VP2 (268 aa).

Positions 132–144 are enriched in polar residues; the sequence is STPQSLGALTGRT. The tract at residues 132–199 is disordered; sequence STPQSLGALT…SLSSAARTRS (68 aa). A compositionally biased stretch (low complexity) spans 145–163; the sequence is NSRVSAPARSSPSALSNAP. Residues 164–178 are compositionally biased toward polar residues; that stretch reads TATSLHSNQTVSTRL. Over residues 179 to 195 the composition is skewed to low complexity; it reads GSSAGSGTGVSSLSSAA.

Belongs to the norovirus VP2 family. In terms of assembly, homooligomer. The portal-like structure consists in 12 copies of VP2. Interacts with capsid protein VP1.

The protein resides in the virion. It is found in the host cytoplasm. Its function is as follows. Minor structural protein that forms a portal-like structure at a unique three-fold axis of symmetry, following binding to the host receptor. The channel formed by VP2 may allow the delivery of the viral genome through the host endosomal membrane. This chain is Minor capsid protein VP2, found in Lordsdale virus (strain GII/Human/United Kingdom/Lordsdale/1993) (Human enteric calicivirus).